A 303-amino-acid polypeptide reads, in one-letter code: MTEFSASLAPQVEAFLRYLSIERQLSPLTVTSYRRQLSALMEIGEQMGLAHWQTLDAAQVRSLVSRSKRAGLHASSLALRLSALRSFLNWLVSQGVLPANPAKGVSTPRSGRHLPKNIDVDEVNKLLSIDLNDPLAVRDRAMLEVMYGAGLRLSELVGMNCKHVDLASGDVWVMGKGSKERKVPLGKTAVTWLQHWLALRELFEPQDDAIFLANTGKRISARNVQKRFAEWGVKQGVSSHIHPHKLRHSFATHMLESSGDLRAVQELLGHANLTTTQIYTHLDFQHLATVYDAAHPRAKRGKS.

Residues 6–92 (ASLAPQVEAF…ALRSFLNWLV (87 aa)) enclose the Core-binding (CB) domain. The Tyr recombinase domain maps to 113-292 (HLPKNIDVDE…DFQHLATVYD (180 aa)). Active-site residues include Arg-152, Lys-176, His-244, Arg-247, and His-270. The O-(3'-phospho-DNA)-tyrosine intermediate role is filled by Tyr-279.

Belongs to the 'phage' integrase family. XerC subfamily. Forms a cyclic heterotetrameric complex composed of two molecules of XerC and two molecules of XerD, in which XerC interacts with XerD via its C-terminal region, XerD interacts with XerC via its C-terminal region and so on.

It localises to the cytoplasm. FtsK may regulate the catalytic switch between XerC and XerD in the heterotetrameric complex during the two steps of the recombination process. Functionally, site-specific tyrosine recombinase, which acts by catalyzing the cutting and rejoining of the recombining DNA molecules. Binds cooperatively to specific DNA consensus sequences that are separated from XerD binding sites by a short central region, forming the heterotetrameric XerC-XerD complex that recombines DNA substrates. The complex is essential to convert dimers of the bacterial chromosome into monomers to permit their segregation at cell division. It also contributes to the segregational stability of plasmids. In the complex XerC specifically exchanges the top DNA strands. The chain is Tyrosine recombinase XerC from Yersinia pestis.